Consider the following 365-residue polypeptide: Aspartate-semialdehyde dehydrogenase (365 aa).

Residues T13, G14, S15, V16, S38, S41, L85, and D86 each contribute to the NADP(+) site. T13 carries the phosphothreonine modification. C156 functions as the Acyl-thioester intermediate in the catalytic mechanism. G188 lines the NADP(+) pocket. The Proton acceptor role is filled by H256. Residues S318 and S323 each carry the phosphoserine modification. Residue N343 participates in NADP(+) binding.

The protein belongs to the aspartate-semialdehyde dehydrogenase family. Homotetramer.

It localises to the cytoplasm. Its subcellular location is the cytosol. It is found in the nucleus. The enzyme catalyses L-aspartate 4-semialdehyde + phosphate + NADP(+) = 4-phospho-L-aspartate + NADPH + H(+). It functions in the pathway amino-acid biosynthesis; L-methionine biosynthesis via de novo pathway; L-homoserine from L-aspartate: step 2/3. Its pathway is amino-acid biosynthesis; L-threonine biosynthesis; L-threonine from L-aspartate: step 2/5. Catalyzes the NADPH-dependent formation of L-aspartate 4-semialdehyde (L-ASA) by the reductive dephosphorylation of 4-phospho-L-aspartate. Mediates the second step in the biosynthesis of amino acids that derive from aspartate (the aspartate family of amino acids), including methioinine and threonine, the latter of which is a precursor to isoleucine. The chain is Aspartate-semialdehyde dehydrogenase (HOM2) from Saccharomyces cerevisiae (strain ATCC 204508 / S288c) (Baker's yeast).